The primary structure comprises 282 residues: Chromatin modification-related protein YNG2 (282 aa).

Residues 35–86 adopt a coiled-coil conformation; it reads LIEEKKKYEQKESQIHKFIRQQGSIPKHPQEDGLDKEIKESLLKCQSLQREK. Residues 123–217 are disordered; the sequence is DGDMDSAAEA…KGQNGSPENE (95 aa). Positions 129–143 are enriched in low complexity; that stretch reads AAEASRESSVVSNSS. Ser-183 is modified (phosphoserine). The residue at position 185 (Thr-185) is a Phosphothreonine. Phosphoserine is present on Ser-188. Residues 191–203 are compositionally biased toward basic and acidic residues; sequence IEKKIARTKEFKN. Positions 204-214 are enriched in polar residues; sequence SRNGKGQNGSP. The segment at 222 to 271 adopts a PHD-type zinc-finger fold; the sequence is TLYCFCQRVSFGEMVACDGPNCKYEWFHYDCVNLKEPPKGTWYCPECKIE. Positions 225, 227, 238, 243, 249, 252, 265, and 268 each coordinate Zn(2+).

The protein belongs to the ING family. In terms of assembly, interacts with H3K4me3 and to a lesser extent with H3K4me2. Component of the NuA4 histone acetyltransferase complex composed of at least ACT1, ARP4, YAF9, VID21, SWC4, EAF3, EAF5, EAF6, EAF7, EPL1, ESA1, TRA1 and YNG2.

It localises to the nucleus. Its function is as follows. Component of the NuA4 histone acetyltransferase complex which is involved in transcriptional activation of selected genes principally by acetylation of nucleosomal histone H4 and H2A. The NuA4 complex is also involved in DNA repair. Involved in cell cycle progression and meiosis. The protein is Chromatin modification-related protein YNG2 (YNG2) of Saccharomyces cerevisiae (strain ATCC 204508 / S288c) (Baker's yeast).